Here is a 705-residue protein sequence, read N- to C-terminus: Elongation factor G (705 aa).

Positions 8–290 (ERYRNFGIMA…GVVHLLPSPA (283 aa)) constitute a tr-type G domain. GTP contacts are provided by residues 17–24 (AHIDAGKT), 88–92 (DTPGH), and 142–145 (NKMD). Residues 290-309 (ADRPPVQGIDEDEKEDTRAA) are disordered.

The protein belongs to the TRAFAC class translation factor GTPase superfamily. Classic translation factor GTPase family. EF-G/EF-2 subfamily.

The protein resides in the cytoplasm. In terms of biological role, catalyzes the GTP-dependent ribosomal translocation step during translation elongation. During this step, the ribosome changes from the pre-translocational (PRE) to the post-translocational (POST) state as the newly formed A-site-bound peptidyl-tRNA and P-site-bound deacylated tRNA move to the P and E sites, respectively. Catalyzes the coordinated movement of the two tRNA molecules, the mRNA and conformational changes in the ribosome. This Xanthomonas oryzae pv. oryzae (strain MAFF 311018) protein is Elongation factor G.